The primary structure comprises 267 residues: MSRLATRFEQLKSQQRKALVSYVMAGDPQPQVSVPLLHKMVEAGVDVIELGLPFSDPMADGPVIALAAERALAAGTNTLDALNMVKEFRQNDSETPVVLMGYLNPVEVIGYEKFVSHAKACGVDGVLLVDLPPEEAKEFDVVLKQHDMDQIFLLAPTSTDQRIEHVVKQASGFIYYVSLKGVTGAATLDVTEAAERIAKIKTKTSVPVGVGFGISDAASAKAMGQVADAVIVGSAFVKPFATLAIDQAVEQTVNKVKELRAALDELV.

Residues E49 and D60 each act as proton acceptor in the active site.

Belongs to the TrpA family. Tetramer of two alpha and two beta chains.

The catalysed reaction is (1S,2R)-1-C-(indol-3-yl)glycerol 3-phosphate + L-serine = D-glyceraldehyde 3-phosphate + L-tryptophan + H2O. It participates in amino-acid biosynthesis; L-tryptophan biosynthesis; L-tryptophan from chorismate: step 5/5. Functionally, the alpha subunit is responsible for the aldol cleavage of indoleglycerol phosphate to indole and glyceraldehyde 3-phosphate. In Acinetobacter baylyi (strain ATCC 33305 / BD413 / ADP1), this protein is Tryptophan synthase alpha chain.